Here is a 311-residue protein sequence, read N- to C-terminus: 4-diphosphocytidyl-2-C-methyl-D-erythritol kinase (311 aa).

Residue K16 is part of the active site. 100–110 (PIGAGLAGGSS) is a binding site for ATP. D142 is an active-site residue.

It belongs to the GHMP kinase family. IspE subfamily.

It carries out the reaction 4-CDP-2-C-methyl-D-erythritol + ATP = 4-CDP-2-C-methyl-D-erythritol 2-phosphate + ADP + H(+). Its pathway is isoprenoid biosynthesis; isopentenyl diphosphate biosynthesis via DXP pathway; isopentenyl diphosphate from 1-deoxy-D-xylulose 5-phosphate: step 3/6. In terms of biological role, catalyzes the phosphorylation of the position 2 hydroxy group of 4-diphosphocytidyl-2C-methyl-D-erythritol. The protein is 4-diphosphocytidyl-2-C-methyl-D-erythritol kinase of Prochlorococcus marinus (strain MIT 9301).